The following is a 637-amino-acid chain: Chaperone protein DnaK (637 aa).

Residue threonine 198 is modified to Phosphothreonine; by autocatalysis. The segment at methionine 597–alanine 637 is disordered. The span at aspartate 605–valine 619 shows a compositional bias: basic and acidic residues. Residues valine 620–aspartate 630 show a composition bias toward acidic residues.

Belongs to the heat shock protein 70 family.

Acts as a chaperone. This is Chaperone protein DnaK from Afipia carboxidovorans (strain ATCC 49405 / DSM 1227 / KCTC 32145 / OM5) (Oligotropha carboxidovorans).